A 543-amino-acid polypeptide reads, in one-letter code: Cytochrome P450 1B1 (543 aa).

A heme-binding site is contributed by Cys470.

The protein belongs to the cytochrome P450 family. Heme serves as cofactor. In terms of tissue distribution, constitutively expressed in retinal and kidney pericytes cells. Expressed in retinal endothelial cells (at protein level). Expressed in cardiac, pulmonary and aortic endothelial cells. Constitutively expressed in trabecular meshwork of the eye (at protein level).

It localises to the endoplasmic reticulum membrane. Its subcellular location is the microsome membrane. The protein resides in the mitochondrion. The enzyme catalyses an organic molecule + reduced [NADPH--hemoprotein reductase] + O2 = an alcohol + oxidized [NADPH--hemoprotein reductase] + H2O + H(+). It catalyses the reaction 17beta-estradiol + reduced [NADPH--hemoprotein reductase] + O2 = 2-hydroxy-17beta-estradiol + oxidized [NADPH--hemoprotein reductase] + H2O + H(+). The catalysed reaction is 17beta-estradiol + reduced [NADPH--hemoprotein reductase] + O2 = 4-hydroxy-17beta-estradiol + oxidized [NADPH--hemoprotein reductase] + H2O + H(+). It carries out the reaction estrone + reduced [NADPH--hemoprotein reductase] + O2 = 2-hydroxyestrone + oxidized [NADPH--hemoprotein reductase] + H2O + H(+). The enzyme catalyses estrone + reduced [NADPH--hemoprotein reductase] + O2 = 4-hydroxyestrone + oxidized [NADPH--hemoprotein reductase] + H2O + H(+). It catalyses the reaction testosterone + reduced [NADPH--hemoprotein reductase] + O2 = 6beta,17beta-dihydroxyandrost-4-en-3-one + oxidized [NADPH--hemoprotein reductase] + H2O + H(+). The catalysed reaction is progesterone + reduced [NADPH--hemoprotein reductase] + O2 = 6beta-hydroxyprogesterone + oxidized [NADPH--hemoprotein reductase] + H2O + H(+). It carries out the reaction progesterone + reduced [NADPH--hemoprotein reductase] + O2 = 16alpha-hydroxyprogesterone + oxidized [NADPH--hemoprotein reductase] + H2O + H(+). The enzyme catalyses all-trans-retinol + reduced [NADPH--hemoprotein reductase] + O2 = all-trans-retinal + oxidized [NADPH--hemoprotein reductase] + 2 H2O + H(+). It catalyses the reaction all-trans-retinal + reduced [NADPH--hemoprotein reductase] + O2 = all-trans-retinoate + oxidized [NADPH--hemoprotein reductase] + H2O + 2 H(+). The catalysed reaction is (5Z,8Z,11Z,14Z)-eicosatetraenoate + reduced [NADPH--hemoprotein reductase] + O2 = (8R,9S)-epoxy-(5Z,11Z,14Z)-eicosatrienoate + oxidized [NADPH--hemoprotein reductase] + H2O + H(+). It carries out the reaction (5Z,8Z,11Z,14Z)-eicosatetraenoate + reduced [NADPH--hemoprotein reductase] + O2 = (11R,12S)-epoxy-(5Z,8Z,14Z)-eicosatrienoate + oxidized [NADPH--hemoprotein reductase] + H2O + H(+). The enzyme catalyses (5Z,8Z,11Z,14Z)-eicosatetraenoate + reduced [NADPH--hemoprotein reductase] + O2 = (11S,12R)-epoxy-(5Z,8Z,14Z)-eicosatrienoate + oxidized [NADPH--hemoprotein reductase] + H2O + H(+). It catalyses the reaction (5Z,8Z,11Z,14Z)-eicosatetraenoate + reduced [NADPH--hemoprotein reductase] + O2 = (14R,15S)-epoxy-(5Z,8Z,11Z)-eicosatrienoate + oxidized [NADPH--hemoprotein reductase] + H2O + H(+). The catalysed reaction is (5S)-hydroperoxy-(6E,8Z,11Z,14Z)-eicosatetraenoate = 5-oxo-(6E,8Z,11Z,14Z)-eicosatetraenoate + H2O. It carries out the reaction (12S)-hydroperoxy-(5Z,8Z,10E,14Z)-eicosatetraenoate = 12-oxo-(5Z,8Z,10E,14Z)-eicosatetraenoate + H2O. The enzyme catalyses (13S)-hydroperoxy-(9Z,11E)-octadecadienoate = 13-oxo-(9Z,11E)-octadecadienoate + H2O. It catalyses the reaction (15S)-hydroperoxy-(5Z,8Z,11Z,13E)-eicosatetraenoate = 15-oxo-(5Z,8Z,11Z,13E)-eicosatetraenoate + H2O. The protein operates within steroid hormone biosynthesis. It functions in the pathway cofactor metabolism; retinol metabolism. Its pathway is lipid metabolism; arachidonate metabolism. With respect to regulation, enzyme activity is increased by cytochrome b5. Enzyme activity is increased by liposomes containing anionic phospholipids, phosphatidic acid and cardiolipin. Inhibited by naringenin with an IC(50) of 5 uM. A cytochrome P450 monooxygenase involved in the metabolism of various endogenous substrates, including fatty acids, steroid hormones and vitamins. Mechanistically, uses molecular oxygen inserting one oxygen atom into a substrate, and reducing the second into a water molecule, with two electrons provided by NADPH via cytochrome P450 reductase (NADPH--hemoprotein reductase). Exhibits catalytic activity for the formation of hydroxyestrogens from 17beta-estradiol (E2), namely 2- and 4-hydroxy E2. Metabolizes testosterone and progesterone to B or D ring hydroxylated metabolites. May act as a major enzyme for all-trans retinoic acid biosynthesis in extrahepatic tissues. Catalyzes two successive oxidative transformation of all-trans retinol to all-trans retinal and then to the active form all-trans retinoic acid. Catalyzes the epoxidation of double bonds of certain PUFA. Converts arachidonic acid toward epoxyeicosatrienoic acid (EpETrE) regioisomers, 8,9-, 11,12-, and 14,15- EpETrE, that function as lipid mediators in the vascular system. Additionally, displays dehydratase activity toward oxygenated eicosanoids hydroperoxyeicosatetraenoates (HpETEs). This activity is independent of cytochrome P450 reductase, NADPH, and O2. Also involved in the oxidative metabolism of xenobiotics, particularly converting polycyclic aromatic hydrocarbons and heterocyclic aryl amines procarcinogens to DNA-damaging products. Plays an important role in retinal vascular development. Under ambient/hyperoxic O2 conditions, promotes angiogenesis and capillary morphogenesis of retinal endothelial cells and pericytes, likely by metabolizing the oxygenated products symptomatic of oxidative stress. Also, contributes to oxidative homeostasis and ultrastructural organization and function of trabecular meshwork tissue through modulation of POSTN expression. This chain is Cytochrome P450 1B1, found in Mus musculus (Mouse).